Reading from the N-terminus, the 249-residue chain is Zinc finger AN1 and C2H2 domain-containing stress-associated protein 13 (249 aa).

AN1-type zinc fingers lie at residues 7–55 (PDLG…RGDV) and 95–145 (AVKK…KPES). Residues Cys-13, Cys-18, Cys-28, Cys-31, Cys-36, His-39, His-45, Cys-47, Cys-101, Cys-106, Cys-118, Cys-121, Cys-126, His-129, His-135, and Cys-137 each coordinate Zn(2+). A disordered region spans residues 194-213 (FASGNDGNSEKTQERNGKQN). Residues 201–210 (NSEKTQERNG) show a composition bias toward basic and acidic residues. The C2H2-type zinc finger occupies 220 to 243 (DVCPKCSRGFRDPVDLLKHIDKDH).

Its function is as follows. May be involved in environmental stress response. In Arabidopsis thaliana (Mouse-ear cress), this protein is Zinc finger AN1 and C2H2 domain-containing stress-associated protein 13 (SAP13).